The primary structure comprises 337 residues: Nucleoid-associated protein Avin_11450 (337 aa).

This sequence belongs to the YejK family.

The protein localises to the cytoplasm. The protein resides in the nucleoid. This Azotobacter vinelandii (strain DJ / ATCC BAA-1303) protein is Nucleoid-associated protein Avin_11450.